Here is a 222-residue protein sequence, read N- to C-terminus: Small ribosomal subunit protein uS5 (222 aa).

The interval 1–41 is disordered; sequence MAEQAGAGSAQDNRGGGRDDRGGRGRRDDRGGRGGRDDREK. Basic and acidic residues predominate over residues 15-41; that stretch reads GGGRDDRGGRGRRDDRGGRGGRDDREK. Residues 44–107 form the S5 DRBM domain; that stretch reads YLERVVTINR…EEARKNFFRV (64 aa).

The protein belongs to the universal ribosomal protein uS5 family. As to quaternary structure, part of the 30S ribosomal subunit. Contacts proteins S4 and S8.

In terms of biological role, with S4 and S12 plays an important role in translational accuracy. Its function is as follows. Located at the back of the 30S subunit body where it stabilizes the conformation of the head with respect to the body. The protein is Small ribosomal subunit protein uS5 of Mycolicibacterium gilvum (strain PYR-GCK) (Mycobacterium gilvum (strain PYR-GCK)).